Consider the following 447-residue polypeptide: Tubulin beta chain (447 aa).

GTP-binding residues include Gln11, Glu69, Ser138, Gly142, Thr143, Gly144, Asn204, and Asn226. Glu69 contacts Mg(2+). The segment at 424–447 (QYQEASVSEGEEEYDEEAPLEAEE) is disordered. The span at 432-447 (EGEEEYDEEAPLEAEE) shows a compositional bias: acidic residues.

It belongs to the tubulin family. Dimer of alpha and beta chains. A typical microtubule is a hollow water-filled tube with an outer diameter of 25 nm and an inner diameter of 15 nM. Alpha-beta heterodimers associate head-to-tail to form protofilaments running lengthwise along the microtubule wall with the beta-tubulin subunit facing the microtubule plus end conferring a structural polarity. Microtubules usually have 13 protofilaments but different protofilament numbers can be found in some organisms and specialized cells. Mg(2+) serves as cofactor.

Its subcellular location is the cytoplasm. It localises to the cytoskeleton. Functionally, tubulin is the major constituent of microtubules, a cylinder consisting of laterally associated linear protofilaments composed of alpha- and beta-tubulin heterodimers. Microtubules grow by the addition of GTP-tubulin dimers to the microtubule end, where a stabilizing cap forms. Below the cap, tubulin dimers are in GDP-bound state, owing to GTPase activity of alpha-tubulin. This chain is Tubulin beta chain (TUB1), found in Cochliobolus heterostrophus (Southern corn leaf blight fungus).